Consider the following 456-residue polypeptide: Phosphomethylpyrimidine synthase (456 aa).

Substrate contacts are provided by residues Asn-80, Met-109, Tyr-139, His-175, 195-197 (SRG), 236-239 (DSLR), and Glu-275. His-279 contributes to the Zn(2+) binding site. Residue Tyr-302 participates in substrate binding. His-343 lines the Zn(2+) pocket. Positions 423, 426, and 431 each coordinate [4Fe-4S] cluster.

This sequence belongs to the ThiC family. [4Fe-4S] cluster is required as a cofactor.

It catalyses the reaction 5-amino-1-(5-phospho-beta-D-ribosyl)imidazole + S-adenosyl-L-methionine = 4-amino-2-methyl-5-(phosphooxymethyl)pyrimidine + CO + 5'-deoxyadenosine + formate + L-methionine + 3 H(+). It participates in cofactor biosynthesis; thiamine diphosphate biosynthesis. Functionally, catalyzes the synthesis of the hydroxymethylpyrimidine phosphate (HMP-P) moiety of thiamine from aminoimidazole ribotide (AIR) in a radical S-adenosyl-L-methionine (SAM)-dependent reaction. This Synechococcus sp. (strain ATCC 27144 / PCC 6301 / SAUG 1402/1) (Anacystis nidulans) protein is Phosphomethylpyrimidine synthase.